The following is an 826-amino-acid chain: (2S)-3-sulfopropanediol dehydratase (826 aa).

Residues 33 to 695 (PRVNRLRQAF…NTNASIDGRK (663 aa)) form the PFL domain. C464 functions as the Cysteine radical intermediate in the catalytic mechanism. Catalysis depends on E466, which acts as the Proton acceptor. The Glycine radical domain maps to 706 to 826 (PVHTDGGSHD…DLIQRTELHF (121 aa)). G802 carries the glycine radical modification.

Belongs to the glycyl radical enzyme (GRE) family. Requires the activating protein HpfH to generate the key active site glycyl radical on Gly-802 that is involved in catalysis.

The enzyme catalyses (2S)-3-sulfopropanediol = 3-oxopropane-1-sulfonate + H2O. It participates in organosulfur degradation; alkanesulfonate degradation. Its function is as follows. Involved in the degradation of the organosulfur compound 2(S)-dihydroxypropanesulfonate (DHPS). Catalyzes the radical-mediated dehydration of DHPS to produce 3-sulfopropionaldehyde (3-oxopropane-1-sulfonate). The protein is (2S)-3-sulfopropanediol dehydratase of Klebsiella oxytoca.